Reading from the N-terminus, the 330-residue chain is MEFYASLKSIAMHVPSERVKNAEFQQFLDTSDEWIEKRTGIKERRFASNEEKSSDLGVIAAKQAIERAHLTPKDIDLVVVATLSPDFLAMPSTACVLSAKLGIENKPAFDISAACTGFIYLLSVAKAYVESGMCENVLIVGAEKTSSVLDFKDRGTCILFGDGAGACVIGRTKRLKESILDVQISANGNFSNYLYTPRTLKPTPFNSKEEALEPFLCMKGNEVFKLAVKTLLKDVETILEKNALKPEDVRLFIPHQANFRIIQAVREHLDFKDEQVVLTVHKYGNTSAASIPMAMCEAYEEGRLKKGDLMLLDAFGGGLTWGSALVYFGG.

Residues Cys-115 and His-255 contribute to the active site. The segment at 256–260 is ACP-binding; the sequence is QANFR. Asn-285 is a catalytic residue.

The protein belongs to the thiolase-like superfamily. FabH family. In terms of assembly, homodimer.

It localises to the cytoplasm. The catalysed reaction is malonyl-[ACP] + acetyl-CoA + H(+) = 3-oxobutanoyl-[ACP] + CO2 + CoA. Its pathway is lipid metabolism; fatty acid biosynthesis. Functionally, catalyzes the condensation reaction of fatty acid synthesis by the addition to an acyl acceptor of two carbons from malonyl-ACP. Catalyzes the first condensation reaction which initiates fatty acid synthesis and may therefore play a role in governing the total rate of fatty acid production. Possesses both acetoacetyl-ACP synthase and acetyl transacylase activities. Its substrate specificity determines the biosynthesis of branched-chain and/or straight-chain of fatty acids. In Helicobacter pylori (strain HPAG1), this protein is Beta-ketoacyl-[acyl-carrier-protein] synthase III.